A 62-amino-acid chain; its full sequence is Kurtoxin-like I (62 aa).

Residues isoleucine 2 to asparagine 62 enclose the LCN-type CS-alpha/beta domain. 4 cysteine pairs are disulfide-bonded: cysteine 12-cysteine 61, cysteine 16-cysteine 37, cysteine 23-cysteine 44, and cysteine 27-cysteine 46.

As to expression, expressed by the venom gland.

The protein localises to the secreted. Functionally, this neurotoxin acts on sodium and calcium channels. Potently inhibits native voltage-gated T-type calcium channel activity in mouse male germ cells and weakly blocks Cav3.3/CACNA1I channels expressed in Xenopus oocytes. In addition, significantly slows the inactivation of activated recombinant sodium channels (Nav1.5/SCN5A). The polypeptide is Kurtoxin-like I (Parabuthus granulatus (Granulated thick-tailed scorpion)).